The primary structure comprises 537 residues: CTP synthase (537 aa).

Positions 1–269 (MNQTKYIFVT…DKVALKKLDL (269 aa)) are amidoligase domain. CTP is bound at residue Ser15. Ser15 contributes to the UTP binding site. Residue 16 to 21 (SLGKGI) coordinates ATP. Tyr56 contacts L-glutamine. Asp73 contacts ATP. Mg(2+)-binding residues include Asp73 and Glu143. Residues 150 to 152 (DIE), 190 to 195 (KTKPTQ), and Lys226 each bind CTP. UTP-binding positions include 190–195 (KTKPTQ) and Lys226. Residues 295-537 (SIGLVGKYVE…IAAAVKHKNK (243 aa)) form the Glutamine amidotransferase type-1 domain. Gly357 provides a ligand contact to L-glutamine. The active-site Nucleophile; for glutamine hydrolysis is Cys384. Residues 385 to 388 (LGMQ), Glu408, and Arg465 contribute to the L-glutamine site. Active-site residues include His510 and Glu512.

It belongs to the CTP synthase family. Homotetramer.

It catalyses the reaction UTP + L-glutamine + ATP + H2O = CTP + L-glutamate + ADP + phosphate + 2 H(+). The catalysed reaction is L-glutamine + H2O = L-glutamate + NH4(+). It carries out the reaction UTP + NH4(+) + ATP = CTP + ADP + phosphate + 2 H(+). Its pathway is pyrimidine metabolism; CTP biosynthesis via de novo pathway; CTP from UDP: step 2/2. Its activity is regulated as follows. Allosterically activated by GTP, when glutamine is the substrate; GTP has no effect on the reaction when ammonia is the substrate. The allosteric effector GTP functions by stabilizing the protein conformation that binds the tetrahedral intermediate(s) formed during glutamine hydrolysis. Inhibited by the product CTP, via allosteric rather than competitive inhibition. In terms of biological role, catalyzes the ATP-dependent amination of UTP to CTP with either L-glutamine or ammonia as the source of nitrogen. Regulates intracellular CTP levels through interactions with the four ribonucleotide triphosphates. This is CTP synthase from Flavobacterium psychrophilum (strain ATCC 49511 / DSM 21280 / CIP 103535 / JIP02/86).